A 344-amino-acid chain; its full sequence is BURP domain-containing protein 16 (344 aa).

The N-terminal stretch at 1 to 25 (MATSFLFSLILLLITALSLPFPLHA) is a signal peptide. N-linked (GlcNAc...) asparagine glycosylation is found at asparagine 90, asparagine 120, asparagine 181, and asparagine 333. Positions 128 to 341 (FFREQELKEG…FNGSMTWVIA (214 aa)) constitute a BURP domain.

As to expression, expressed in roots, stems, leaves and panicles.

This is BURP domain-containing protein 16 (BURP16) from Oryza sativa subsp. japonica (Rice).